A 374-amino-acid chain; its full sequence is 5-pentadecatrienyl resorcinol O-methyltransferase (374 aa).

The S-adenosyl-L-methionine site is built by Asp239, Asp261, Met262, and Lys275. His279 functions as the Proton acceptor in the catalytic mechanism.

This sequence belongs to the class I-like SAM-binding methyltransferase superfamily. Cation-independent O-methyltransferase family. COMT subfamily. As to quaternary structure, homodimer. As to expression, expressed predominantly in root hairs.

It catalyses the reaction (8Z,11Z)-5-(pentadeca-8,11,14-trien-1-yl)resorcinol + S-adenosyl-L-methionine = (8Z,11Z)-5-(pentadeca- 8,11,14-trien-1-yl)resorcinol-3-methyl ether + S-adenosyl-L-homocysteine + H(+). O-methyltransferase involved in the biosynthetic pathway of the phytotoxin sorgoleone, a potent broad-spectrum inhibitor active against many agronomically important monocot and dicot weed species. Substrate specificity for alkylresorcinols. Strong preference for a five carbons alkyl side chain. The chain is 5-pentadecatrienyl resorcinol O-methyltransferase (OMT3) from Sorghum bicolor (Sorghum).